Here is a 214-residue protein sequence, read N- to C-terminus: MNQHLLEQFGTTHERVERGLAALRTGQGVLVADDADRENEGDLIFAAETLTPAQMAMMIRECSGIVCLCLPEERVSRLGLPMMVAHNTSSMGTAFTISIEAAEGVTTGVSAADRVRTVKAAIDDAACPGCLRSPGHVFPLRASPGGVLERRGHTEATVDLMRLAGLKPYGVLCELTNPDGTMARLPQLVDFAQRNRMTVLTVEDLVAYRQDKGL.

D-ribulose 5-phosphate-binding positions include 37–38 (RE), Asp-42, 150–154 (RRGHT), and Glu-174. Glu-38 provides a ligand contact to Mg(2+). His-153 lines the Mg(2+) pocket.

It belongs to the DHBP synthase family. As to quaternary structure, homodimer. Mg(2+) serves as cofactor. It depends on Mn(2+) as a cofactor.

It carries out the reaction D-ribulose 5-phosphate = (2S)-2-hydroxy-3-oxobutyl phosphate + formate + H(+). Its pathway is cofactor biosynthesis; riboflavin biosynthesis; 2-hydroxy-3-oxobutyl phosphate from D-ribulose 5-phosphate: step 1/1. Functionally, catalyzes the conversion of D-ribulose 5-phosphate to formate and 3,4-dihydroxy-2-butanone 4-phosphate. In Nitratidesulfovibrio vulgaris (strain ATCC 29579 / DSM 644 / CCUG 34227 / NCIMB 8303 / VKM B-1760 / Hildenborough) (Desulfovibrio vulgaris), this protein is 3,4-dihydroxy-2-butanone 4-phosphate synthase.